Here is a 316-residue protein sequence, read N- to C-terminus: 4-diphosphocytidyl-2-C-methyl-D-erythritol kinase (316 aa).

Residue Lys32 is part of the active site. 126–136 provides a ligand contact to ATP; the sequence is PVGAGLGGGSA. The active site involves Asp168.

This sequence belongs to the GHMP kinase family. IspE subfamily.

It carries out the reaction 4-CDP-2-C-methyl-D-erythritol + ATP = 4-CDP-2-C-methyl-D-erythritol 2-phosphate + ADP + H(+). It functions in the pathway isoprenoid biosynthesis; isopentenyl diphosphate biosynthesis via DXP pathway; isopentenyl diphosphate from 1-deoxy-D-xylulose 5-phosphate: step 3/6. Functionally, catalyzes the phosphorylation of the position 2 hydroxy group of 4-diphosphocytidyl-2C-methyl-D-erythritol. The sequence is that of 4-diphosphocytidyl-2-C-methyl-D-erythritol kinase from Bifidobacterium longum (strain NCC 2705).